Here is a 104-residue protein sequence, read N- to C-terminus: Nucleoid-associated protein Amuc_1227 (104 aa).

It belongs to the YbaB/EbfC family. As to quaternary structure, homodimer.

It localises to the cytoplasm. The protein localises to the nucleoid. Binds to DNA and alters its conformation. May be involved in regulation of gene expression, nucleoid organization and DNA protection. In Akkermansia muciniphila (strain ATCC BAA-835 / DSM 22959 / JCM 33894 / BCRC 81048 / CCUG 64013 / CIP 107961 / Muc), this protein is Nucleoid-associated protein Amuc_1227.